Here is a 344-residue protein sequence, read N- to C-terminus: MSLTYRDAGVDIDEGDRLVELIKPHARPTLRPEVLAGIGGFGGLFALDVKKYREPVLVSGTDGVGTKLKVAFAANRHDTIGIDLVAMCVNDVAVVGAEPLFFLDYFGTGKLSAEQGAEVVKGIAEGCRQAGCALIGGETAELPGFYAPGEYDLAGFAVGCVERSRIVDGKGVAPGDVVVGVASTGLHSNGYSLARKALMDRHPLDRRFDGLGGRTLGEALLEPTRIYAKDVLALLDAVPVKAFSHITGGGLPGNVPRTLPDGTRAVLEEKRWPRPAIFDLVEREGGVPRDEMYRTFNMGLGLVAVVAPGDEAAAHAALRARGLDAWTVGQIEVGTGEATCEVVR.

Belongs to the AIR synthase family.

The protein resides in the cytoplasm. The enzyme catalyses 2-formamido-N(1)-(5-O-phospho-beta-D-ribosyl)acetamidine + ATP = 5-amino-1-(5-phospho-beta-D-ribosyl)imidazole + ADP + phosphate + H(+). The protein operates within purine metabolism; IMP biosynthesis via de novo pathway; 5-amino-1-(5-phospho-D-ribosyl)imidazole from N(2)-formyl-N(1)-(5-phospho-D-ribosyl)glycinamide: step 2/2. This Anaeromyxobacter sp. (strain Fw109-5) protein is Phosphoribosylformylglycinamidine cyclo-ligase.